We begin with the raw amino-acid sequence, 433 residues long: Glutamate-1-semialdehyde 2,1-aminomutase (433 aa).

At K269 the chain carries N6-(pyridoxal phosphate)lysine.

The protein belongs to the class-III pyridoxal-phosphate-dependent aminotransferase family. HemL subfamily. Homodimer. Pyridoxal 5'-phosphate serves as cofactor.

It localises to the cytoplasm. The catalysed reaction is (S)-4-amino-5-oxopentanoate = 5-aminolevulinate. Its pathway is porphyrin-containing compound metabolism; protoporphyrin-IX biosynthesis; 5-aminolevulinate from L-glutamyl-tRNA(Glu): step 2/2. The protein is Glutamate-1-semialdehyde 2,1-aminomutase of Francisella philomiragia subsp. philomiragia (strain ATCC 25017 / CCUG 19701 / FSC 153 / O#319-036).